The following is a 74-amino-acid chain: Small ribosomal subunit protein bS20c (74 aa).

It belongs to the bacterial ribosomal protein bS20 family.

The protein localises to the plastid. Its subcellular location is the chloroplast. Binds directly to 16S ribosomal RNA. The protein is Small ribosomal subunit protein bS20c of Cyanidioschyzon merolae (strain NIES-3377 / 10D) (Unicellular red alga).